Reading from the N-terminus, the 325-residue chain is Inner membrane protein YrbG (325 aa).

The Periplasmic segment spans residues 1 to 5 (MLLAT). The helical transmembrane segment at 6-26 (ALLIVGLLLVVYSADRLVFAA) threads the bilayer. Residues 27–37 (SILCRTFGIPP) lie on the Cytoplasmic side of the membrane. The helical transmembrane segment at 38–58 (LIIGMTVVSIGTSLPEVIVSL) threads the bilayer. Topologically, residues 59 to 67 (AASLHEQRD) are periplasmic. The helical transmembrane segment at 68-88 (LAVGTALGSNIINILLILGLA) threads the bilayer. The Cytoplasmic portion of the chain corresponds to 89 to 104 (ALVRPFTVHSDVLRRE). The helical transmembrane segment at 105 to 125 (LPLMLLVSVVAGSVLYDGQLS) threads the bilayer. A topological domain (periplasmic) is located at residue R126. The helical transmembrane segment at 127-147 (SDGIFLLFLAVLWLLFIVKLA) threads the bilayer. Over 148–169 (RQAERQGTDSLTREQLAELPRD) the chain is Cytoplasmic. A helical membrane pass occupies residues 170–190 (GGLPVAFLWLGIALIIMPVAT). The Periplasmic portion of the chain corresponds to 191–198 (RMVVDNAT). The chain crosses the membrane as a helical span at residues 199–219 (VLANYFAISELTMGLTAIAIG). At 220–243 (TSLPELATAIAGVRKGENDIAVGN) the chain is on the cytoplasmic side. A helical transmembrane segment spans residues 244–264 (IIGANIFNIVIVLGLPALITP). Topologically, residues 265–269 (GEIDP) are periplasmic. Residues 270–290 (LAYSRDYSVMLLVSIIFALLC) traverse the membrane as a helical segment. Over 291–302 (WRRSPQPGRGVG) the chain is Cytoplasmic. A helical transmembrane segment spans residues 303 to 323 (VLLTGGFIVWLAMLYWLSPIL). At 324–325 (VE) the chain is on the periplasmic side.

It belongs to the Ca(2+):cation antiporter (CaCA) (TC 2.A.19) family.

It localises to the cell inner membrane. The protein is Inner membrane protein YrbG (yrbG) of Escherichia coli (strain K12).